A 112-amino-acid chain; its full sequence is Large ribosomal subunit protein P2 (112 aa).

The segment at 81-112 is disordered; it reads VETAEAKKEDKKEEKKEEEEEEEDDLGFSLFG. Basic and acidic residues predominate over residues 84–95; it reads AEAKKEDKKEEK. Positions 96-106 are enriched in acidic residues; sequence KEEEEEEEDDL.

Belongs to the eukaryotic ribosomal protein P1/P2 family. In terms of assembly, P1 and P2 exist as dimers at the large ribosomal subunit. Phosphorylated.

Plays an important role in the elongation step of protein synthesis. This is Large ribosomal subunit protein P2 (MAL3P3.19) from Plasmodium falciparum (isolate 3D7).